The sequence spans 1415 residues: Zygote defective protein 9 (1415 aa).

2 TOG regions span residues 1-250 (MSNW…AKNA) and 251-530 (PPVA…AGPA). The stretch at 21-48 (DELRESKKWQERKEALEALLKVLTDNER) forms a coiled coil. HEAT repeat units lie at residues 30 to 68 (QERKEALEALLKVLTDNERLSTKASYAELIGHLQMVLAK), 95 to 132 (SFAGPLLPVIFEKMKEKKPMLREPLVDCSNEVGRTMQS), 135 to 172 (TGQEDILAALAKPNPQIKQQTALFVARQLDLVVPAKQP), and 179 to 217 (VVPVFGKLTGDADQDVREASLQGLGAVQRIIGDKNVKNL). The interval 243–278 (AEEQAKNAPPVAPTSSTPSASAASGDPSGGTATAVV) is disordered. The segment covering 255-276 (PTSSTPSASAASGDPSGGTATA) has biased composition (low complexity). HEAT repeat units lie at residues 339 to 377 (ANYGALVERLQKVLEKDANINVAALAANCITGIANGLRT), 381 to 418 (PFAVSVTPIIFEKFKEKKPTLRDPLVACIDAVVATTNL), 420 to 457 (AVGEIVLAALGKPNPSIKTQTDLFLQRCFMKLNSQTMP), and 464 to 502 (LIPSLIKHSGDSDSEVREASYAAMGAMMRAIGEKPSLQL). A disordered region spans residues 544-603 (APPAAAPPKKTAPPKKQPEDEEVVEEEDEPLKPPPGDKKKKVPVKENEENEPPVVAPKAE). A compositionally biased stretch (acidic residues) spans 562–572 (EDEEVVEEEDE). Residues 602-867 (AELLLSDNED…VEERIKRTGV (266 aa)) form a TOG 3 region. HEAT repeat units lie at residues 706–743 (IKVLELCKVIVELIRDTETPMSQEEVSAFVPYLLLKTG), 764–801 (VGPLKMTPMLLDALKSKNARQRSECLLVIEYYITNAGI), and 804–841 (LKSLSVEKTVAPFVGDKDVNVRNAAINVLVACFKFEGD). A disordered region spans residues 867 to 914 (VKPGSGVVTSPPTGGPKILVPQQQGSVVRRPASRSRTREPEPEEVQSD).

Belongs to the TOG/XMAP215 family. In terms of assembly, interacts with tac-1 to form a heterodimer.

It localises to the cytoplasm. Its subcellular location is the cytoskeleton. The protein resides in the spindle pole. The protein localises to the microtubule organizing center. It is found in the centrosome. In terms of biological role, plays a major role in organizing microtubules and spindle poles during mitosis and meiosis in one-cell stage embryos. Required for default nucleus positioning in oocytes. The polypeptide is Zygote defective protein 9 (Caenorhabditis elegans).